We begin with the raw amino-acid sequence, 184 residues long: Shikimate kinase (184 aa).

17-22 (SVGKTS) lines the ATP pocket. Position 21 (Thr-21) interacts with Mg(2+). Substrate is bound by residues Asp-39 and Gly-85.

Belongs to the shikimate kinase family. As to quaternary structure, monomer. Mg(2+) serves as cofactor.

Its subcellular location is the cytoplasm. The catalysed reaction is shikimate + ATP = 3-phosphoshikimate + ADP + H(+). It functions in the pathway metabolic intermediate biosynthesis; chorismate biosynthesis; chorismate from D-erythrose 4-phosphate and phosphoenolpyruvate: step 5/7. Functionally, catalyzes the specific phosphorylation of the 3-hydroxyl group of shikimic acid using ATP as a cosubstrate. This chain is Shikimate kinase, found in Chlamydia muridarum (strain MoPn / Nigg).